Consider the following 417-residue polypeptide: MKFTELTVKEFENFVQNPSLESHYFQVKENIATRESDGFQVVLLGVKDDDNRVIAASLFSKIPTMGSYVYYSNRGPVMDYSDLGLVDFYLKELDKYLHQHQCLYVKLDPYWLYQVYDKDINPLTEKNDALVNLFKSHGYDHHGFTTQYDSSSQVRWMGVLDLEGKTPASLRKEFDSQRKRNINKAINYGVKVRFLSKDEFGLFLDLYRETEARTGFASKTDDYFYNFIEHYGDKVLVPLAYIDLNEYIQHLQESLNDKENRRDDMMAKENKTDKQLKKIAELDKQIDHDKKELLQASELRQTDGEILNLASGVYFANAYEVNYFSGGSSEKYNQYMGPYAMHWHMINYCFDNGYDRYNFYGLSGDFTENSEDYGVYRFKRGFNVRIEELIGDFYKPINKVKYWLFNTLDRIRNKLKK.

It belongs to the FemABX family.

It is found in the cytoplasm. It catalyses the reaction MurNAc-L-Ala-D-isoglutaminyl-L-Lys-(N(6)-tri-Gly)-D-Ala-D-Ala-diphospho-di-trans,octa-cis-undecaprenyl-GlcNAc + 2 glycyl-tRNA(Gly) = MurNAc-L-Ala-D-isoglutaminyl-L-Lys-(N(6)-penta-Gly)-D-Ala-D-Ala-diphospho-di-trans,octa-cis-undecaprenyl-GlcNAc + 2 tRNA(Gly) + 2 H(+). In terms of biological role, catalyzes the incorporation of amino acid(s) into the interchain peptide bridge of peptidoglycan, using aminoacyl-tRNA as amino acid donor. The sequence is that of Aminoacyltransferase FemB (femB) from Staphylococcus epidermidis.